A 430-amino-acid chain; its full sequence is Probable folylpolyglutamate synthase (430 aa).

37–40 (GKET) provides a ligand contact to ATP. E132 is a Mg(2+) binding site. Position 300 (D300) interacts with ATP.

Belongs to the folylpolyglutamate synthase family.

It localises to the mitochondrion. The catalysed reaction is (6S)-5,6,7,8-tetrahydrofolyl-(gamma-L-Glu)(n) + L-glutamate + ATP = (6S)-5,6,7,8-tetrahydrofolyl-(gamma-L-Glu)(n+1) + ADP + phosphate + H(+). It participates in cofactor biosynthesis; tetrahydrofolylpolyglutamate biosynthesis. Conversion of folates to polyglutamate derivatives. In Saccharomyces cerevisiae (strain ATCC 204508 / S288c) (Baker's yeast), this protein is Probable folylpolyglutamate synthase (RMA1).